The sequence spans 185 residues: Phospholipase A2 inhibitor 25 kDa subunit (185 aa).

8 disulfide bridges follow: C3–C27, C6–C13, C20–C48, C54–C75, C76–C81, C101–C126, C119–C146, and C152–C172.

Belongs to the CNF-like-inhibitor family. Heterodimer with phospholipase A2 inhibitor 31 kDa. In terms of tissue distribution, expressed by the liver.

Its subcellular location is the secreted. In terms of biological role, inhibits the enzymatic activity of phospholipase A2. This is Phospholipase A2 inhibitor 25 kDa subunit from Naja kaouthia (Monocled cobra).